Reading from the N-terminus, the 202-residue chain is LexA repressor (202 aa).

A DNA-binding region (H-T-H motif) is located at residues 28 to 48 (RAEIAQQLGFRSPNAAEEHLK). Residues S119 and K156 each act as for autocatalytic cleavage activity in the active site.

This sequence belongs to the peptidase S24 family. As to quaternary structure, homodimer.

It carries out the reaction Hydrolysis of Ala-|-Gly bond in repressor LexA.. Represses a number of genes involved in the response to DNA damage (SOS response), including recA and lexA. In the presence of single-stranded DNA, RecA interacts with LexA causing an autocatalytic cleavage which disrupts the DNA-binding part of LexA, leading to derepression of the SOS regulon and eventually DNA repair. This chain is LexA repressor, found in Pectobacterium atrosepticum (strain SCRI 1043 / ATCC BAA-672) (Erwinia carotovora subsp. atroseptica).